The following is a 363-amino-acid chain: Probable dual-specificity RNA methyltransferase RlmN (363 aa).

The active-site Proton acceptor is the E99. Residues 105-341 (SENRMTACVS…VTVRKSHGAS (237 aa)) enclose the Radical SAM core domain. A disulfide bridge connects residues C112 and C346. Residues C119, C123, and C126 each contribute to the [4Fe-4S] cluster site. Residues 171 to 172 (GE), S204, 227 to 229 (SLH), and N303 each bind S-adenosyl-L-methionine. C346 serves as the catalytic S-methylcysteine intermediate.

Belongs to the radical SAM superfamily. RlmN family. The cofactor is [4Fe-4S] cluster.

Its subcellular location is the cytoplasm. The catalysed reaction is adenosine(2503) in 23S rRNA + 2 reduced [2Fe-2S]-[ferredoxin] + 2 S-adenosyl-L-methionine = 2-methyladenosine(2503) in 23S rRNA + 5'-deoxyadenosine + L-methionine + 2 oxidized [2Fe-2S]-[ferredoxin] + S-adenosyl-L-homocysteine. The enzyme catalyses adenosine(37) in tRNA + 2 reduced [2Fe-2S]-[ferredoxin] + 2 S-adenosyl-L-methionine = 2-methyladenosine(37) in tRNA + 5'-deoxyadenosine + L-methionine + 2 oxidized [2Fe-2S]-[ferredoxin] + S-adenosyl-L-homocysteine. Functionally, specifically methylates position 2 of adenine 2503 in 23S rRNA and position 2 of adenine 37 in tRNAs. The chain is Probable dual-specificity RNA methyltransferase RlmN from Chlorobium phaeobacteroides (strain DSM 266 / SMG 266 / 2430).